The sequence spans 146 residues: Hemoglobin subunit beta (146 aa).

V1 carries the post-translational modification N-acetylvaline. The region spanning 2–146 is the Globin domain; that stretch reads HLTGEEKAAV…VANALAHKYH (145 aa). At T12 the chain carries Phosphothreonine. S44 is modified (phosphoserine). An N6-acetyllysine modification is found at K59. Residue H63 coordinates heme b. N6-acetyllysine is present on K82. Position 92 (H92) interacts with heme b. The residue at position 93 (C93) is an S-nitrosocysteine. K144 carries the post-translational modification N6-acetyllysine.

This sequence belongs to the globin family. Heterotetramer of two alpha chains and two beta chains. As to expression, red blood cells.

In terms of biological role, involved in oxygen transport from the lung to the various peripheral tissues. In Lutra lutra (European river otter), this protein is Hemoglobin subunit beta (HBB).